The primary structure comprises 630 residues: tRNA uridine 5-carboxymethylaminomethyl modification enzyme MnmG (630 aa).

15-20 is an FAD binding site; it reads GAGHAG. Position 276 to 290 (276 to 290) interacts with NAD(+); the sequence is GPRYCPSIEDKIVRF.

Belongs to the MnmG family. As to quaternary structure, homodimer. Heterotetramer of two MnmE and two MnmG subunits. The cofactor is FAD.

The protein resides in the cytoplasm. In terms of biological role, NAD-binding protein involved in the addition of a carboxymethylaminomethyl (cmnm) group at the wobble position (U34) of certain tRNAs, forming tRNA-cmnm(5)s(2)U34. The polypeptide is tRNA uridine 5-carboxymethylaminomethyl modification enzyme MnmG (Latilactobacillus sakei subsp. sakei (strain 23K) (Lactobacillus sakei subsp. sakei)).